Here is a 439-residue protein sequence, read N- to C-terminus: Glutamate--tRNA ligase 2 (439 aa).

A 'HIGH' region motif is present at residues 6–16 (PSPTGDMHIGN). A 'KMSKS' region motif is present at residues 232-236 (KMSKR). Residue lysine 235 coordinates ATP.

This sequence belongs to the class-I aminoacyl-tRNA synthetase family. Glutamate--tRNA ligase type 1 subfamily. In terms of assembly, monomer.

The protein resides in the cytoplasm. The catalysed reaction is tRNA(Glu) + L-glutamate + ATP = L-glutamyl-tRNA(Glu) + AMP + diphosphate. Its function is as follows. Catalyzes the attachment of glutamate to tRNA(Glu) in a two-step reaction: glutamate is first activated by ATP to form Glu-AMP and then transferred to the acceptor end of tRNA(Glu). The chain is Glutamate--tRNA ligase 2 from Helicobacter pylori (strain HPAG1).